We begin with the raw amino-acid sequence, 570 residues long: Urease subunit alpha (570 aa).

Residues 131–570 (GGMDSHIHFI…LPMAQRYFLF (440 aa)) form the Urease domain. Ni(2+)-binding residues include histidine 136, histidine 138, and lysine 219. Lysine 219 is subject to N6-carboxylysine. Histidine 221 serves as a coordination point for substrate. The Ni(2+) site is built by histidine 248 and histidine 274. Histidine 322 acts as the Proton donor in catalysis. Aspartate 362 is a binding site for Ni(2+).

This sequence belongs to the metallo-dependent hydrolases superfamily. Urease alpha subunit family. As to quaternary structure, heterotrimer of UreA (gamma), UreB (beta) and UreC (alpha) subunits. Three heterotrimers associate to form the active enzyme. The cofactor is Ni cation. Post-translationally, carboxylation allows a single lysine to coordinate two nickel ions.

Its subcellular location is the cytoplasm. It carries out the reaction urea + 2 H2O + H(+) = hydrogencarbonate + 2 NH4(+). Its pathway is nitrogen metabolism; urea degradation; CO(2) and NH(3) from urea (urease route): step 1/1. This is Urease subunit alpha from Rhizobium etli (strain ATCC 51251 / DSM 11541 / JCM 21823 / NBRC 15573 / CFN 42).